The following is a 254-amino-acid chain: Ankyrin repeat domain-containing protein 7 (254 aa).

5 ANK repeats span residues 58 to 87, 91 to 120, 124 to 153, 157 to 186, and 190 to 219; these read KYRT…KINV, ENKS…DPDL, RYNT…DLEA, DGYT…DVNA, and YQRT…ELCY.

As to expression, testis specific.

This Homo sapiens (Human) protein is Ankyrin repeat domain-containing protein 7 (ANKRD7).